Here is a 37-residue protein sequence, read N- to C-terminus: Large ribosomal subunit protein bL36c (37 aa).

This sequence belongs to the bacterial ribosomal protein bL36 family.

It is found in the plastid. It localises to the cyanelle. The sequence is that of Large ribosomal subunit protein bL36c (rpl36) from Cyanophora paradoxa.